The following is a 247-amino-acid chain: UPF0659 protein C216.03 (247 aa).

It belongs to the UPF0659 family.

It is found in the cytoplasm. The protein localises to the nucleus. This Schizosaccharomyces pombe (strain 972 / ATCC 24843) (Fission yeast) protein is UPF0659 protein C216.03.